The sequence spans 279 residues: Epidermal growth factor-like protein 7 (279 aa).

Residues 1 to 21 form the signal peptide; the sequence is MWGSGELLVAWFLVLAAGGTT. Residues 28–109 form the EMI domain; sequence SRRVCTVGVS…TNGLPGACGA (82 aa). 9 disulfides stabilise this stretch: Cys32–Cys94, Cys57–Cys63, Cys93–Cys107, Cys112–Cys122, Cys116–Cys128, Cys130–Cys139, Cys146–Cys157, Cys153–Cys166, and Cys168–Cys181. In terms of domain architecture, EGF-like 1 spans 108 to 140; the sequence is GAAICQPPCGNEGSCIRPGRCRCPVGWQGDTCQ. The short motif at 131-133 is the Cell attachment site element; the sequence is PVG. An EGF-like 2; calcium-binding domain is found at 142–182; that stretch reads DVDECSTGEARCPQRCVNTVGSYWCQCWEGQSPSADGVLCL. Coiled coils occupy residues 200-224 and 250-274; these read SVVR…QLVL and FQQL…GSCS.

Interacts with ITGAV/ITGB3 in an RGD-dependent manner, increasing endothelial cell's motility.

The protein resides in the secreted. It is found in the extracellular space. Functionally, regulates vascular tubulogenesis in vivo. Inhibits platelet-derived growth factor (PDGF)-BB-induced smooth muscle cell migration and promotes endothelial cell adhesion to the extracellular matrix and angiogenesis. The protein is Epidermal growth factor-like protein 7 (Egfl7) of Rattus norvegicus (Rat).